The sequence spans 210 residues: Glutathione S-transferase P 10 (210 aa).

The region spanning 2-81 (AVPQLYYFTI…HLGRVHGLNG (80 aa)) is the GST N-terminal domain. Glutathione contacts are provided by residues Y8, W41, K45, 52–53 (QL), and 65–66 (QT). The GST C-terminal domain maps to 83–200 (NEQEATFLDM…YLEKRKADKV (118 aa)).

This sequence belongs to the GST superfamily. Pi family. In terms of assembly, homodimer. Expressed in cells at the mouth and adjacent to the pharyngeal bulbs of the head and also in the tail.

It catalyses the reaction RX + glutathione = an S-substituted glutathione + a halide anion + H(+). Conjugation of reduced glutathione to a wide number of exogenous and endogenous hydrophobic electrophiles. Responsible for approximately one-third of 4-hydroxy-2-nonenal conjugation. May play a role in the detoxification of reactive oxygen species produced during pathogenic bacterial infection. The sequence is that of Glutathione S-transferase P 10 from Caenorhabditis elegans.